A 3148-amino-acid chain; its full sequence is Huntingtin (3148 aa).

HEAT repeat units follow at residues proline 149–histidine 186 and glycine 191–arginine 228. Polar residues-rich tracts occupy residues glutamine 428–glutamine 451, serine 475–proline 486, and proline 516–glycine 526. 2 disordered regions span residues glutamine 428–threonine 532 and glutamine 557–serine 622. Basic and acidic residues predominate over residues serine 602–methionine 621. HEAT repeat units follow at residues leucine 760 to glycine 797 and leucine 861 to phenylalanine 898. 2 stretches are compositionally biased toward low complexity: residues threonine 1025–serine 1042 and serine 1105–threonine 1115. Disordered regions lie at residues threonine 1025–glutamate 1047, tryptophan 1098–lysine 1117, and glycine 1158–alanine 1215. The segment covering glutamate 1201–alanine 1215 has biased composition (polar residues). Residues leucine 1419–asparagine 1456 form an HEAT 5 repeat. Residues proline 1712–proline 1730 are compositionally biased toward polar residues. Disordered stretches follow at residues proline 1712 to glutamine 1735 and valine 2072 to proline 2091. The span at valine 2072 to serine 2084 shows a compositional bias: low complexity. The short motif at isoleucine 2398–leucine 2407 is the Nuclear export signal element. Residues glutamate 2639–aspartate 2649 show a composition bias toward acidic residues. Positions glutamate 2639–arginine 2664 are disordered. Residues proline 2650–serine 2659 are compositionally biased toward pro residues.

The protein belongs to the huntingtin family.

Its subcellular location is the cytoplasm. The protein resides in the nucleus. Functionally, may play a role in microtubule-mediated transport or vesicle function. This is Huntingtin (htt) from Takifugu rubripes (Japanese pufferfish).